Reading from the N-terminus, the 376-residue chain is Penicillin V acylase (376 aa).

The signal sequence occupies residues 1–29 (MIKNNKRIKSTVCALSLVALTLGSAVSLA). Cysteine 30 serves as the catalytic Nucleophile.

The protein belongs to the peptidase C59 family. Homotetramer. Dimer of dimers.

Its subcellular location is the periplasm. It carries out the reaction a penicillin + H2O = 6-aminopenicillanate + a carboxylate. Exhibits uncharacteristic kinetic behavior, showing positive cooperativity coupled with substrate inhibition. Penicillin acylase activity is enhanced in the presence of the reducing agent DTT, indicating active sulfhydryl group in the enzyme. Also shows enhanced activity in presence of organic solvents and detergents. Inhibited largely in presence of Ag(+), Hg(2+) and Cd(2+) ions, which have strong affinities for sulfhydryl groups. Activity is also inhibited by bile salts. Functionally, catalyzes the hydrolysis of penicillin V to 6-aminopenicillanate (6-APA). Shows high specificity towards penicillin V. Can use other beta-lactam substrates, including penicillin G, ampicillin, cephalexin, cloxacillin and dicloxacillin, but at a rate less than 10% of that of penicillin V. Does not show any activity with glyco- or tauro-conjugated bile salts. The chain is Penicillin V acylase from Pectobacterium atrosepticum (strain SCRI 1043 / ATCC BAA-672) (Erwinia carotovora subsp. atroseptica).